The following is an 86-amino-acid chain: Large ribosomal subunit protein uL23 (86 aa).

The protein belongs to the universal ribosomal protein uL23 family. In terms of assembly, part of the 50S ribosomal subunit. Contacts protein L29.

In terms of biological role, binds to 23S rRNA. One of the proteins that surrounds the polypeptide exit tunnel on the outside of the ribosome. In Methanobrevibacter smithii (strain ATCC 35061 / DSM 861 / OCM 144 / PS), this protein is Large ribosomal subunit protein uL23.